Consider the following 226-residue polypeptide: PKHD-type hydroxylase Pput_0892 (226 aa).

One can recognise a Fe2OG dioxygenase domain in the interval 78-178 (KVFPPLINCY…RYAAFFWTQS (101 aa)). 3 residues coordinate Fe cation: His96, Asp98, and His159. Position 169 (Arg169) interacts with 2-oxoglutarate.

Fe(2+) is required as a cofactor. Requires L-ascorbate as cofactor.

The protein is PKHD-type hydroxylase Pput_0892 of Pseudomonas putida (strain ATCC 700007 / DSM 6899 / JCM 31910 / BCRC 17059 / LMG 24140 / F1).